The following is a 196-amino-acid chain: Endoribonuclease YbeY (196 aa).

3 residues coordinate Zn(2+): His120, His124, and His130.

The protein belongs to the endoribonuclease YbeY family. Zn(2+) serves as cofactor.

It is found in the cytoplasm. Functionally, single strand-specific metallo-endoribonuclease involved in late-stage 70S ribosome quality control and in maturation of the 3' terminus of the 16S rRNA. The sequence is that of Endoribonuclease YbeY from Corynebacterium diphtheriae (strain ATCC 700971 / NCTC 13129 / Biotype gravis).